We begin with the raw amino-acid sequence, 307 residues long: tRNA dimethylallyltransferase 2 (307 aa).

Residue 9-16 (GPTAVGKT) coordinates ATP. 11–16 (TAVGKT) provides a ligand contact to substrate. Positions 34 to 37 (DSRQ) are interaction with substrate tRNA.

It belongs to the IPP transferase family. In terms of assembly, monomer. Mg(2+) serves as cofactor.

It carries out the reaction adenosine(37) in tRNA + dimethylallyl diphosphate = N(6)-dimethylallyladenosine(37) in tRNA + diphosphate. In terms of biological role, catalyzes the transfer of a dimethylallyl group onto the adenine at position 37 in tRNAs that read codons beginning with uridine, leading to the formation of N6-(dimethylallyl)adenosine (i(6)A). The polypeptide is tRNA dimethylallyltransferase 2 (Azobacteroides pseudotrichonymphae genomovar. CFP2).